The chain runs to 368 residues: MRLMVSGGGTGGHIYPALALIERLKQVEPDTEVLYVGAKRGLETKIVPQAGYRLETMEVQGFRRSLSLENVKTVYLFLKAVAQAKKLIKDFRPDVVLGTGGYVSGAVLYAAAKLGVPTVIHEQNSVVGVTNKFLARYVNEVAIAFEAARSQFPKSSVTMTGNPRAQQVAQRTNSAYSWTEDGLKDGVPTIMIFGGSQGAPRINKAVVEALPSFNEQPYQVIFATGRKRYDDVMGALAGQPIGDNVKVVPYIEDMPDKLPHVDALVSRAGATTIAEVTALGIPTILIPSPYVTANHQVKNAEALVKKGAALMILEDQLDGRSLITQANHLMNDAAVRQKMAANSKAVGHPDASDQLIAVLKKAIADHQK.

Residues 10–12 (TGG), Asn124, Ser196, Ile251, and Gln296 contribute to the UDP-N-acetyl-alpha-D-glucosamine site.

The protein belongs to the glycosyltransferase 28 family. MurG subfamily.

The protein localises to the cell membrane. The catalysed reaction is Mur2Ac(oyl-L-Ala-gamma-D-Glu-L-Lys-D-Ala-D-Ala)-di-trans,octa-cis-undecaprenyl diphosphate + UDP-N-acetyl-alpha-D-glucosamine = beta-D-GlcNAc-(1-&gt;4)-Mur2Ac(oyl-L-Ala-gamma-D-Glu-L-Lys-D-Ala-D-Ala)-di-trans,octa-cis-undecaprenyl diphosphate + UDP + H(+). The protein operates within cell wall biogenesis; peptidoglycan biosynthesis. Functionally, cell wall formation. Catalyzes the transfer of a GlcNAc subunit on undecaprenyl-pyrophosphoryl-MurNAc-pentapeptide (lipid intermediate I) to form undecaprenyl-pyrophosphoryl-MurNAc-(pentapeptide)GlcNAc (lipid intermediate II). This is UDP-N-acetylglucosamine--N-acetylmuramyl-(pentapeptide) pyrophosphoryl-undecaprenol N-acetylglucosamine transferase from Limosilactobacillus fermentum (strain NBRC 3956 / LMG 18251) (Lactobacillus fermentum).